Consider the following 313-residue polypeptide: Methionyl-tRNA formyltransferase (313 aa).

Residue 112–115 (SLLP) coordinates (6S)-5,6,7,8-tetrahydrofolate.

It belongs to the Fmt family.

The catalysed reaction is L-methionyl-tRNA(fMet) + (6R)-10-formyltetrahydrofolate = N-formyl-L-methionyl-tRNA(fMet) + (6S)-5,6,7,8-tetrahydrofolate + H(+). In terms of biological role, attaches a formyl group to the free amino group of methionyl-tRNA(fMet). The formyl group appears to play a dual role in the initiator identity of N-formylmethionyl-tRNA by promoting its recognition by IF2 and preventing the misappropriation of this tRNA by the elongation apparatus. The polypeptide is Methionyl-tRNA formyltransferase (Roseiflexus castenholzii (strain DSM 13941 / HLO8)).